A 329-amino-acid polypeptide reads, in one-letter code: NADH-quinone oxidoreductase subunit H (329 aa).

Helical transmembrane passes span 9–29 (LIKILILVAVFSALGGFATYI), 42–62 (GPSYVGPFGLLQVAADGIKLF), 75–95 (LIFTLAPIIAMVSAFVSMAPI), 117–137 (IGFLFFLAVGAAGIYAPILAG), 154–174 (IQLLSFEVVSTLTILAPLMVV), 188–208 (GGFLDWLVFKQPLAFILFLIA), 238–258 (LKWGMFFLAEYAHLFAFSFVI), 269–291 (WGFIPGGIAILIKVSFFVFLSMW), and 309–329 (WKIMLPLALLNIVLTGVIILI).

It belongs to the complex I subunit 1 family. In terms of assembly, NDH-1 is composed of 14 different subunits. Subunits NuoA, H, J, K, L, M, N constitute the membrane sector of the complex.

It localises to the cell inner membrane. The catalysed reaction is a quinone + NADH + 5 H(+)(in) = a quinol + NAD(+) + 4 H(+)(out). In terms of biological role, NDH-1 shuttles electrons from NADH, via FMN and iron-sulfur (Fe-S) centers, to quinones in the respiratory chain. The immediate electron acceptor for the enzyme in this species is believed to be ubiquinone. Couples the redox reaction to proton translocation (for every two electrons transferred, four hydrogen ions are translocated across the cytoplasmic membrane), and thus conserves the redox energy in a proton gradient. This subunit may bind ubiquinone. This Helicobacter acinonychis (strain Sheeba) protein is NADH-quinone oxidoreductase subunit H.